A 107-amino-acid polypeptide reads, in one-letter code: uncharacterized protein (107 aa).

A run of 4 helical transmembrane segments spans residues 9 to 28, 33 to 50, 55 to 72, and 77 to 99; these read FLVF…LIME, SYII…SLNI, LAIA…AIHV, and YRVI…YLKG.

Its subcellular location is the cell membrane. This is an uncharacterized protein from Archaeoglobus fulgidus (strain ATCC 49558 / DSM 4304 / JCM 9628 / NBRC 100126 / VC-16).